Consider the following 417-residue polypeptide: NADH-quinone oxidoreductase subunit D (417 aa).

This sequence belongs to the complex I 49 kDa subunit family. In terms of assembly, NDH-1 is composed of 14 different subunits. Subunits NuoB, C, D, E, F, and G constitute the peripheral sector of the complex.

It localises to the cell membrane. It carries out the reaction a quinone + NADH + 5 H(+)(in) = a quinol + NAD(+) + 4 H(+)(out). NDH-1 shuttles electrons from NADH, via FMN and iron-sulfur (Fe-S) centers, to quinones in the respiratory chain. The immediate electron acceptor for the enzyme in this species is believed to be ubiquinone. Couples the redox reaction to proton translocation (for every two electrons transferred, four hydrogen ions are translocated across the cytoplasmic membrane), and thus conserves the redox energy in a proton gradient. The polypeptide is NADH-quinone oxidoreductase subunit D (Polynucleobacter asymbioticus (strain DSM 18221 / CIP 109841 / QLW-P1DMWA-1) (Polynucleobacter necessarius subsp. asymbioticus)).